The primary structure comprises 378 residues: Succinyl-diaminopimelate desuccinylase (378 aa).

His-68 lines the Zn(2+) pocket. Asp-70 is an active-site residue. Asp-101 provides a ligand contact to Zn(2+). Catalysis depends on Glu-135, which acts as the Proton acceptor. 3 residues coordinate Zn(2+): Glu-136, Glu-164, and His-350.

Belongs to the peptidase M20A family. DapE subfamily. As to quaternary structure, homodimer. The cofactor is Zn(2+). Co(2+) is required as a cofactor.

The catalysed reaction is N-succinyl-(2S,6S)-2,6-diaminopimelate + H2O = (2S,6S)-2,6-diaminopimelate + succinate. The protein operates within amino-acid biosynthesis; L-lysine biosynthesis via DAP pathway; LL-2,6-diaminopimelate from (S)-tetrahydrodipicolinate (succinylase route): step 3/3. Catalyzes the hydrolysis of N-succinyl-L,L-diaminopimelic acid (SDAP), forming succinate and LL-2,6-diaminopimelate (DAP), an intermediate involved in the bacterial biosynthesis of lysine and meso-diaminopimelic acid, an essential component of bacterial cell walls. This is Succinyl-diaminopimelate desuccinylase from Vibrio campbellii (strain ATCC BAA-1116).